The chain runs to 123 residues: UPF0102 protein APP7_1414 (123 aa).

This sequence belongs to the UPF0102 family.

The polypeptide is UPF0102 protein APP7_1414 (Actinobacillus pleuropneumoniae serotype 7 (strain AP76)).